The following is a 114-amino-acid chain: MRNTLIAVTTVSLLAFSTASLAGPSRTTKGALLGATAGLLSGNGVNGVLKGAALGAGVGAISEKGRKGKKARKGATIGATVGAVAGVLSGNGIEGAIKGAVVGGAGGAIIGRIQ.

It belongs to the UPF0757 family.

The polypeptide is UPF0757 protein YmgG (Edwardsiella ictaluri (strain 93-146)).